The following is a 146-amino-acid chain: Ribosome maturation factor RimP (146 aa).

It belongs to the RimP family.

It is found in the cytoplasm. In terms of biological role, required for maturation of 30S ribosomal subunits. The protein is Ribosome maturation factor RimP of Helicobacter pylori (strain J99 / ATCC 700824) (Campylobacter pylori J99).